The primary structure comprises 454 residues: uncharacterized protein (454 aa).

125 to 132 (GDVGCGKT) is a binding site for ATP.

Belongs to the AFG1 ATPase family.

This is an uncharacterized protein from Schizosaccharomyces pombe (strain 972 / ATCC 24843) (Fission yeast).